The following is a 288-amino-acid chain: Acetyl-coenzyme A carboxylase carboxyl transferase subunit beta (288 aa).

One can recognise a CoA carboxyltransferase N-terminal domain in the interval 34-288 (LFAKCPACKH…HLVAFHGGVS (255 aa)). Zn(2+)-binding residues include cysteine 38, cysteine 41, cysteine 56, and cysteine 59. Residues 38-59 (CPACKHMIYQKDLGPAKICPTC) form a C4-type zinc finger.

This sequence belongs to the AccD/PCCB family. In terms of assembly, acetyl-CoA carboxylase is a heterohexamer composed of biotin carboxyl carrier protein (AccB), biotin carboxylase (AccC) and two subunits each of ACCase subunit alpha (AccA) and ACCase subunit beta (AccD). Requires Zn(2+) as cofactor.

It is found in the cytoplasm. The enzyme catalyses N(6)-carboxybiotinyl-L-lysyl-[protein] + acetyl-CoA = N(6)-biotinyl-L-lysyl-[protein] + malonyl-CoA. Its pathway is lipid metabolism; malonyl-CoA biosynthesis; malonyl-CoA from acetyl-CoA: step 1/1. Its function is as follows. Component of the acetyl coenzyme A carboxylase (ACC) complex. Biotin carboxylase (BC) catalyzes the carboxylation of biotin on its carrier protein (BCCP) and then the CO(2) group is transferred by the transcarboxylase to acetyl-CoA to form malonyl-CoA. The sequence is that of Acetyl-coenzyme A carboxylase carboxyl transferase subunit beta from Streptococcus equi subsp. zooepidemicus (strain MGCS10565).